The primary structure comprises 769 residues: Amino-acid acetyltransferase, mitochondrial (769 aa).

Positions 150–172 (LKASPAKSGQEPTESPKESISAS) are disordered. Positions 159 to 172 (QEPTESPKESISAS) are enriched in polar residues. An N-acetyltransferase domain is found at 590 to 759 (MQPRLGLNDP…YEAVCRSIQP (170 aa)).

It belongs to the acetyltransferase family.

Its subcellular location is the mitochondrion. The catalysed reaction is L-glutamate + acetyl-CoA = N-acetyl-L-glutamate + CoA + H(+). It participates in amino-acid biosynthesis; L-arginine biosynthesis; N(2)-acetyl-L-ornithine from L-glutamate: step 1/4. Functionally, N-acetylglutamate synthase involved in arginine biosynthesis. The polypeptide is Amino-acid acetyltransferase, mitochondrial (arg2) (Penicillium rubens (strain ATCC 28089 / DSM 1075 / NRRL 1951 / Wisconsin 54-1255) (Penicillium chrysogenum)).